The sequence spans 245 residues: High affinity immunoglobulin epsilon receptor subunit alpha (245 aa).

Residues 1-23 form the signal peptide; the sequence is MDTGGSARLCLALVLISLGVMLT. Topologically, residues 24-204 are extracellular; that stretch reads ATQKSVVSLD…DYTIEYRWLQ (181 aa). Ig-like domains are found at residues 28 to 103 and 113 to 181; these read SVVS…KPVY and LQSS…LNKV. Cys49 and Cys91 are disulfide-bonded. N-linked (GlcNAc...) asparagine glycans are attached at residues Asn52, Asn53, Asn58, Asn65, Asn123, Asn158, and Asn167. An intrachain disulfide couples Cys130 to Cys174. A helical membrane pass occupies residues 205–223; that stretch reads LIFPSLAVILFAVDTGLWF. Residues 224 to 245 are Cytoplasmic-facing; the sequence is STHKQFESILKIQKTGKGKKKG.

As to quaternary structure, tetramer of an alpha chain, a beta chain, and two disulfide linked gamma chains. Interacts with IGHE (via CH3 region). In terms of tissue distribution, expressed in leukocytes and pinealocytes at night (at protein level).

Its subcellular location is the cell membrane. The protein localises to the secreted. Its function is as follows. High-affinity receptor for immunoglobulin epsilon/IgE. Mediates IgE effector functions in myeloid cells. Upon IgE binding and antigen/allergen cross-linking initiates signaling pathways that lead to myeloid cell activation and differentiation. On mast cells, basophils and eosinophils stimulates the secretion of vasoactive amines, lipid mediators and cytokines that contribute to inflammatory response, tissue remodeling and cytotoxicity against microbes. Triggers the immediate hypersensitivity response to allergens as a host defense mechanism against helminth parasites, pathogenic bacteria and venom toxicity. When dysregulated, it can elicit harmful life-threatening allergic and anaphylactic reactions. The chain is High affinity immunoglobulin epsilon receptor subunit alpha (Fcer1a) from Rattus norvegicus (Rat).